Consider the following 390-residue polypeptide: Protein arginine N-methyltransferase 1.1 (390 aa).

Positions 1 to 10 are enriched in basic and acidic residues; that stretch reads MTKNSNHDEN. Residues 1-59 are disordered; it reads MTKNSNHDENEFISFEPNQNTKIRFEDADEDEVAEGSGVAGEETPQDESMFDAGESADT. Residues 69–390 enclose the SAM-dependent MTase PRMT-type domain; the sequence is ADYYFDSYSH…ISRTQHYKMR (322 aa). Catalysis depends on residues E181 and E190.

Belongs to the class I-like SAM-binding methyltransferase superfamily. Protein arginine N-methyltransferase family. As to quaternary structure, interacts with PRMT12, MBD7 and FIB2.

It localises to the nucleus. The protein resides in the cytoplasm. The catalysed reaction is L-arginyl-[protein] + 2 S-adenosyl-L-methionine = N(omega),N(omega)-dimethyl-L-arginyl-[protein] + 2 S-adenosyl-L-homocysteine + 2 H(+). In terms of biological role, methylates (mono and asymmetric dimethylation) the guanidino nitrogens of arginyl residues present in a glycine and arginine-rich domain. Type I arginine methyltransferase active on both histones and non-histone proteins. Required for leaves and flowers development. Mediates the methylation of MBD7 and MED36A. This is Protein arginine N-methyltransferase 1.1 (PRMT11) from Arabidopsis thaliana (Mouse-ear cress).